Reading from the N-terminus, the 247-residue chain is Aspartate/glutamate leucyltransferase (247 aa).

The protein belongs to the R-transferase family. Bpt subfamily.

It is found in the cytoplasm. The catalysed reaction is N-terminal L-glutamyl-[protein] + L-leucyl-tRNA(Leu) = N-terminal L-leucyl-L-glutamyl-[protein] + tRNA(Leu) + H(+). It catalyses the reaction N-terminal L-aspartyl-[protein] + L-leucyl-tRNA(Leu) = N-terminal L-leucyl-L-aspartyl-[protein] + tRNA(Leu) + H(+). Functions in the N-end rule pathway of protein degradation where it conjugates Leu from its aminoacyl-tRNA to the N-termini of proteins containing an N-terminal aspartate or glutamate. In Chromohalobacter salexigens (strain ATCC BAA-138 / DSM 3043 / CIP 106854 / NCIMB 13768 / 1H11), this protein is Aspartate/glutamate leucyltransferase.